A 420-amino-acid chain; its full sequence is Putative kinase Y4mE (420 aa).

Aspartate 302 (proton acceptor) is an active-site residue.

Belongs to the HipA Ser/Thr kinase family.

This chain is Putative kinase Y4mE, found in Sinorhizobium fredii (strain NBRC 101917 / NGR234).